Reading from the N-terminus, the 897-residue chain is Protein translocase subunit SecA (897 aa).

ATP contacts are provided by residues Gln-87, 105 to 109 (GEGKT), and Asp-512. Residues 846-897 (EEEQQKQARKKMVFNLVDEDETSEPSKSKKLAGRNEPCPCGSGKKYKKCCGK) are disordered. The Zn(2+) site is built by Cys-883, Cys-885, Cys-894, and Cys-895.

It belongs to the SecA family. In terms of assembly, monomer and homodimer. Part of the essential Sec protein translocation apparatus which comprises SecA, SecYEG and auxiliary proteins SecDF-YajC and YidC. Zn(2+) serves as cofactor.

Its subcellular location is the cell inner membrane. It is found in the cytoplasm. The catalysed reaction is ATP + H2O + cellular proteinSide 1 = ADP + phosphate + cellular proteinSide 2.. Functionally, part of the Sec protein translocase complex. Interacts with the SecYEG preprotein conducting channel. Has a central role in coupling the hydrolysis of ATP to the transfer of proteins into and across the cell membrane, serving as an ATP-driven molecular motor driving the stepwise translocation of polypeptide chains across the membrane. The chain is Protein translocase subunit SecA from Geobacter sulfurreducens (strain ATCC 51573 / DSM 12127 / PCA).